The primary structure comprises 261 residues: Pimeloyl-[acyl-carrier protein] methyl ester esterase (261 aa).

Positions 16-241 constitute an AB hydrolase-1 domain; it reads LVLIHGWGMN…QASHAPFISH (226 aa). Substrate contacts are provided by residues W22, 82–83, and 143–147; these read SL and FMTLQ. S82 acts as the Nucleophile in catalysis. Residues D207 and H235 contribute to the active site. H235 contacts substrate.

Belongs to the AB hydrolase superfamily. Carboxylesterase BioH family. In terms of assembly, monomer.

It localises to the cytoplasm. It carries out the reaction 6-carboxyhexanoyl-[ACP] methyl ester + H2O = 6-carboxyhexanoyl-[ACP] + methanol + H(+). It participates in cofactor biosynthesis; biotin biosynthesis. The physiological role of BioH is to remove the methyl group introduced by BioC when the pimeloyl moiety is complete. It allows to synthesize pimeloyl-ACP via the fatty acid synthetic pathway through the hydrolysis of the ester bonds of pimeloyl-ACP esters. The chain is Pimeloyl-[acyl-carrier protein] methyl ester esterase from Aliivibrio salmonicida (strain LFI1238) (Vibrio salmonicida (strain LFI1238)).